The following is a 214-amino-acid chain: Adenylate kinase (214 aa).

10 to 15 (GAGKGT) lines the ATP pocket. Residues 30 to 59 (STGDMFRDHKARGTEIGKQVQAIMDAGGLV) form an NMP region. AMP-binding positions include Thr31, Arg36, 57-59 (GLV), 85-88 (GYPR), and Gln92. An LID region spans residues 126–163 (GRRSCPRCGAVYHVSQNPPHRAGFCDRDDTALVQREDD). ATP is bound at residue Arg127. Residues Cys130 and Cys133 each contribute to the Zn(2+) site. 136–137 (VY) is a binding site for ATP. Residues Cys150 and Asp153 each contribute to the Zn(2+) site. AMP-binding residues include Arg160 and Arg171. Residue Gly199 participates in ATP binding.

The protein belongs to the adenylate kinase family. In terms of assembly, monomer.

The protein resides in the cytoplasm. The enzyme catalyses AMP + ATP = 2 ADP. It participates in purine metabolism; AMP biosynthesis via salvage pathway; AMP from ADP: step 1/1. Its function is as follows. Catalyzes the reversible transfer of the terminal phosphate group between ATP and AMP. Plays an important role in cellular energy homeostasis and in adenine nucleotide metabolism. In Anaeromyxobacter sp. (strain K), this protein is Adenylate kinase.